The chain runs to 159 residues: F1845 fimbrial protein (159 aa).

Positions 1-21 are cleaved as a signal peptide; it reads MKKLAIMAAASMIFTVGSAQA.

This sequence belongs to the Dr-adhesin family.

It localises to the fimbrium. Its function is as follows. Hemagglutinins of uropathogenic E.coli mediate adherence to the upper urinary tract. These adhesins bind to the Dr blood group antigen and also agglutinate human erythrocytes in the presence of D-mannose (mannose-resistant hemagglutination (MRHA)). C1845 is a strain responsible for diarrheal disease. The polypeptide is F1845 fimbrial protein (daaE) (Escherichia coli).